We begin with the raw amino-acid sequence, 544 residues long: Membrane protein insertase YidC (544 aa).

The helical transmembrane segment at 6–26 threads the bilayer; sequence NILLIGLLFVSFLLWQQWQAD. The disordered stretch occupies residues 34–58; it reads AAQTQSSIPASTVADSHSSDVPDAD. The segment covering 39 to 49 has biased composition (polar residues); it reads SSIPASTVADS. The next 4 membrane-spanning stretches (helical) occupy residues 345–365, 423–443, 460–480, and 503–523; these read LLMFFHSIVGNWGFAIILITL, GGCLPILLQMPIFIALYWVLL, LSVQDPYYVLPILMGISMFVM, and VIFTVFFLWFPAGLVLYWLVG.

The protein belongs to the OXA1/ALB3/YidC family. Type 1 subfamily. As to quaternary structure, interacts with the Sec translocase complex via SecD. Specifically interacts with transmembrane segments of nascent integral membrane proteins during membrane integration.

Its subcellular location is the cell inner membrane. Required for the insertion and/or proper folding and/or complex formation of integral membrane proteins into the membrane. Involved in integration of membrane proteins that insert both dependently and independently of the Sec translocase complex, as well as at least some lipoproteins. Aids folding of multispanning membrane proteins. This chain is Membrane protein insertase YidC, found in Shewanella halifaxensis (strain HAW-EB4).